Consider the following 255-residue polypeptide: MLLALGPKAWPKLSQFKPLLRISGGETLHRNSRHWAGQGQRQGPGLRTRLLITALFGAGLGWAWLAARAEKEQWRQQQRTEALRQAAVGQGDFSLLDHKGQPRCKADFRGQWVLMYFGFTHCPDICPDELEKLVQVVRKLEAEPDLPLVQPVFITVDPERDDVAAMARYVQEFHPRLLGLTGSTEQVAHASRNYRVYYSAGPKDEDQDYIVDHSIAIYLLNPDGLFTDYYGRSRSAEQIVESIRRHIAAFHSVLP.

A mitochondrion-targeting transit peptide spans 1 to 41 (MLLALGPKAWPKLSQFKPLLRISGGETLHRNSRHWAGQGQR). Residues 42–49 (QGPGLRTR) are Mitochondrial matrix-facing. Residues 50 to 67 (LLITALFGAGLGWAWLAA) form a helical membrane-spanning segment. Residues 68–255 (RAEKEQWRQQ…HIAAFHSVLP (188 aa)) lie on the Mitochondrial intermembrane side of the membrane. In terms of domain architecture, Thioredoxin spans 74 to 248 (WRQQQRTEAL…IVESIRRHIA (175 aa)). The Cu cation site is built by C122, C126, and H213. A disulfide bridge links C122 with C126.

The protein belongs to the SCO1/2 family. Homodimer. Interacts with COA6. Found in a complex with TMEM177, COX20, COA6, MT-CO2/COX2, COX18 and SCO1. Interacts with TMEM177 in a COX20-dependent manner. Interacts with COX20 in a MT-CO2/COX2- and COX18-dependent manner. Interacts with COX16. In terms of tissue distribution, expressed in retina, retinal pigment epithelium, and sclera.

It is found in the mitochondrion inner membrane. Copper metallochaperone essential for the synthesis and maturation of cytochrome c oxidase subunit II (MT-CO2/COX2) by facilitating the incorporation of copper into the Cu(A) site of MT-CO2/COX2. Could also act as a thiol-disulfide oxidoreductase to regulate the redox state of the cysteines in SCO1 during maturation of MT-CO2/COX2. This chain is Protein SCO2 homolog, mitochondrial (Sco2), found in Mus musculus (Mouse).